Reading from the N-terminus, the 54-residue chain is Ovomucoid (54 aa).

Residues 4-54 (VDCSDYPKPSCTLEDKPLCGSDNQTYSNKCSFCNAVVDSNGTLTLSHFGKC) enclose the Kazal-like domain. Disulfide bonds link Cys6-Cys36, Cys14-Cys33, and Cys22-Cys54. The N-linked (GlcNAc...) asparagine glycan is linked to Asn43.

The protein resides in the secreted. The sequence is that of Ovomucoid from Megapodius freycinet (Dusky scrubfowl).